The sequence spans 359 residues: Serine hydrolase-like protein DDB_G0286239 (359 aa).

The AB hydrolase-1 domain maps to 38 to 289; that stretch reads LALHGWLDNA…VPGSHHFHME (252 aa). Residue serine 111 is part of the active site. The segment at 310-359 is disordered; the sequence is FTPSSTTQQQQQQQQSAENKKGDNHNQIAEQDLSTSNTSSPIISKPKPNL. A compositionally biased stretch (polar residues) spans 334-351; it reads HNQIAEQDLSTSNTSSPI.

It belongs to the AB hydrolase superfamily.

Its function is as follows. Probable serine hydrolase. The polypeptide is Serine hydrolase-like protein DDB_G0286239 (Dictyostelium discoideum (Social amoeba)).